The chain runs to 283 residues: Thymidylate synthase (283 aa).

Arginine 22 is a binding site for dUMP. Residue cysteine 160 is the Nucleophile of the active site. Residues 180–183 (RSCD), asparagine 191, and 221–223 (HIY) each bind dUMP. Position 183 (aspartate 183) interacts with (6R)-5,10-methylene-5,6,7,8-tetrahydrofolate. Serine 282 is a (6R)-5,10-methylene-5,6,7,8-tetrahydrofolate binding site.

It belongs to the thymidylate synthase family. Bacterial-type ThyA subfamily. In terms of assembly, homodimer.

It localises to the cytoplasm. The catalysed reaction is dUMP + (6R)-5,10-methylene-5,6,7,8-tetrahydrofolate = 7,8-dihydrofolate + dTMP. The protein operates within pyrimidine metabolism; dTTP biosynthesis. Its function is as follows. Catalyzes the reductive methylation of 2'-deoxyuridine-5'-monophosphate (dUMP) to 2'-deoxythymidine-5'-monophosphate (dTMP) while utilizing 5,10-methylenetetrahydrofolate (mTHF) as the methyl donor and reductant in the reaction, yielding dihydrofolate (DHF) as a by-product. This enzymatic reaction provides an intracellular de novo source of dTMP, an essential precursor for DNA biosynthesis. This chain is Thymidylate synthase, found in Vibrio vulnificus (strain YJ016).